The following is a 153-amino-acid chain: Large ribosomal subunit protein uL15 (153 aa).

The tract at residues 1–42 (MKLNTIKPGIGSAKPKRRVGRGIGSGLGKTCGRGHKGQKSRA) is disordered. Residues 21–31 (RGIGSGLGKTC) are compositionally biased toward gly residues.

It belongs to the universal ribosomal protein uL15 family. In terms of assembly, part of the 50S ribosomal subunit.

Functionally, binds to the 23S rRNA. This Nitrosomonas europaea (strain ATCC 19718 / CIP 103999 / KCTC 2705 / NBRC 14298) protein is Large ribosomal subunit protein uL15.